A 553-amino-acid polypeptide reads, in one-letter code: Flagellar hook-associated protein 1 (553 aa).

This sequence belongs to the flagella basal body rod proteins family.

The protein resides in the secreted. Its subcellular location is the bacterial flagellum. The protein is Flagellar hook-associated protein 1 (flgK) of Salmonella typhi.